The primary structure comprises 258 residues: Sugar fermentation stimulation protein homolog (258 aa).

It belongs to the SfsA family.

The protein is Sugar fermentation stimulation protein homolog of Prochlorococcus marinus (strain NATL2A).